Reading from the N-terminus, the 500-residue chain is NAD(P)H-quinone oxidoreductase subunit 2 A, chloroplastic (500 aa).

13 helical membrane-spanning segments follow: residues 14 to 34, 47 to 67, 89 to 109, 114 to 134, 139 to 159, 173 to 193, 217 to 237, 285 to 305, 313 to 333, 344 to 364, 385 to 405, 408 to 428, and 474 to 494; these read LLLFDGSLIFPECILIFGLIL, IPWFYFISSTSLVMSITALLF, IFQFLILLCSTLSIPLSVEYI, MAITEFLLFILTATLGGMFLC, FITIFVAPECFSLCSYLLSGY, YLLMGGASSSILVHAFSWLYG, PGISIALIFITVGIGFKLSPA, WHLLLEILAILSMILGNLIAI, MLAYSSIGQIGYVIIGIIVGD, YMLFYISMNLGTFACIVLFGL, ALSLALCLLSLGGLPPLAGFF, LHLFWCGWQAGLSFLVSIGLL, and MIVCVIASTIPGISMNPIIAI.

It belongs to the complex I subunit 2 family. As to quaternary structure, NDH is composed of at least 16 different subunits, 5 of which are encoded in the nucleus.

The protein resides in the plastid. It localises to the chloroplast thylakoid membrane. It catalyses the reaction a plastoquinone + NADH + (n+1) H(+)(in) = a plastoquinol + NAD(+) + n H(+)(out). It carries out the reaction a plastoquinone + NADPH + (n+1) H(+)(in) = a plastoquinol + NADP(+) + n H(+)(out). Functionally, NDH shuttles electrons from NAD(P)H:plastoquinone, via FMN and iron-sulfur (Fe-S) centers, to quinones in the photosynthetic chain and possibly in a chloroplast respiratory chain. The immediate electron acceptor for the enzyme in this species is believed to be plastoquinone. Couples the redox reaction to proton translocation, and thus conserves the redox energy in a proton gradient. In Pelargonium hortorum (Common geranium), this protein is NAD(P)H-quinone oxidoreductase subunit 2 A, chloroplastic.